The following is a 170-amino-acid chain: ATP synthase subunit b, chloroplastic (170 aa).

Residues 15–35 (ILETNVINLAVVVGVVVFFVG) form a helical membrane-spanning segment.

The protein belongs to the ATPase B chain family. F-type ATPases have 2 components, F(1) - the catalytic core - and F(0) - the membrane proton channel. F(1) has five subunits: alpha(3), beta(3), gamma(1), delta(1), epsilon(1). F(0) has four main subunits: a(1), b(1), b'(1) and c(10-14). The alpha and beta chains form an alternating ring which encloses part of the gamma chain. F(1) is attached to F(0) by a central stalk formed by the gamma and epsilon chains, while a peripheral stalk is formed by the delta, b and b' chains.

Its subcellular location is the plastid. It localises to the chloroplast thylakoid membrane. Functionally, f(1)F(0) ATP synthase produces ATP from ADP in the presence of a proton or sodium gradient. F-type ATPases consist of two structural domains, F(1) containing the extramembraneous catalytic core and F(0) containing the membrane proton channel, linked together by a central stalk and a peripheral stalk. During catalysis, ATP synthesis in the catalytic domain of F(1) is coupled via a rotary mechanism of the central stalk subunits to proton translocation. Component of the F(0) channel, it forms part of the peripheral stalk, linking F(1) to F(0). The sequence is that of ATP synthase subunit b, chloroplastic from Stigeoclonium helveticum (Green alga).